Consider the following 44-residue polypeptide: Cytochrome b559 subunit beta (44 aa).

The helical transmembrane segment at 19–35 (WLAIHGIAVPTIFFLGA) threads the bilayer. Heme is bound at residue His-23.

Belongs to the PsbE/PsbF family. Heterodimer of an alpha subunit and a beta subunit. PSII is composed of 1 copy each of membrane proteins PsbA, PsbB, PsbC, PsbD, PsbE, PsbF, PsbH, PsbI, PsbJ, PsbK, PsbL, PsbM, PsbT, PsbX, PsbY, PsbZ, Psb30/Ycf12, at least 3 peripheral proteins of the oxygen-evolving complex and a large number of cofactors. It forms dimeric complexes. Heme b is required as a cofactor.

The protein localises to the plastid. Its subcellular location is the chloroplast thylakoid membrane. This b-type cytochrome is tightly associated with the reaction center of photosystem II (PSII). PSII is a light-driven water:plastoquinone oxidoreductase that uses light energy to abstract electrons from H(2)O, generating O(2) and a proton gradient subsequently used for ATP formation. It consists of a core antenna complex that captures photons, and an electron transfer chain that converts photonic excitation into a charge separation. This Chlamydomonas reinhardtii (Chlamydomonas smithii) protein is Cytochrome b559 subunit beta.